Reading from the N-terminus, the 299-residue chain is UDP-N-acetylenolpyruvoylglucosamine reductase (299 aa).

An FAD-binding PCMH-type domain is found at 31-192 (VGGVAEVVFK…VDATFVGACG (162 aa)). R172 is an active-site residue. S221 (proton donor) is an active-site residue. E291 is a catalytic residue.

Belongs to the MurB family. It depends on FAD as a cofactor.

It is found in the cytoplasm. It catalyses the reaction UDP-N-acetyl-alpha-D-muramate + NADP(+) = UDP-N-acetyl-3-O-(1-carboxyvinyl)-alpha-D-glucosamine + NADPH + H(+). The protein operates within cell wall biogenesis; peptidoglycan biosynthesis. Functionally, cell wall formation. The polypeptide is UDP-N-acetylenolpyruvoylglucosamine reductase (Anaplasma marginale (strain St. Maries)).